The sequence spans 470 residues: MHFSIPETESRSGDSGGSTYVAYNIHVNGVLHCRVRYSQLLGLHEQLRKEYGANVLPAFPPKKLFSLTPAEVEQRREQLEKYMQAVRQDPLLGSSETFNSFLRRAQQETQQVPTEEVSLEVLLSDGQKVLVNVLTSDQTEDVLEAVAAKLDLPDDLIGYFSLFLVREKEDGAFSFVRKLQEFELPYVSVTSLRSQEYKIVLRKSYWDSAYDDDVMENRVGLNLLYAQTVSDIEHGWILVTKEQHRQLKSLQEKVSKKEFLRLAQTLRHYGYLRFDACVADFPEKDCPVVVSAGNSELSLQLRLPGQQLREGSFRVTRMRCWRVTSSVPLPSGGTSTPSRGRGEVRLELAFEYLMSKDRLQWVTITSPQAIMMSICLQSMVDELMVKKSGGSIRKMLRRRVGGNLRRSDSQQAVKSPPLLESPDASRESMVKLSSKLSAVSLRGIGSPSTDASASAVHGNFAFEGIGDEDL.

The 109-residue stretch at M1–T109 folds into the PX domain. Residues R36, S38, K62, and R75 each coordinate a 1,2-diacyl-sn-glycero-3-phospho-(1D-myo-inositol-3-phosphate). The Ras-associating domain maps to E115–W206. The FERM-like stretch occupies residues E115–L432. Residues G270–L432 are PTB-like F3 module. The interval G401–S425 is disordered. Phosphoserine is present on residues S407, S409, S415, S421, S437, and S440.

This sequence belongs to the sorting nexin family. Monomer. Interacts with APP (via cytoplasmic YXNPXY motif). Interacts with KIF1B. Interacts with the C-termini of P-selectin, PTC, LDLR, VLDLR, LRP1 and LRP8. Interacts with KRIT1 (via N-terminus). Interacts with HRAS. Interacts with ITGB1 and ITGB5 (via NPxY motif). Interacts with CCDC22 and CCDC93; the interaction associates SNX17 with the CCC complex. Interacts (via C-terminus) with VPS26C and VPS35L; the interactions are direct and associate SNX17 with the retriever complex.

It is found in the cytoplasm. It localises to the early endosome. The protein localises to the cytoplasmic vesicle membrane. Critical regulator of endosomal recycling of numerous surface proteins, including integrins, signaling receptor and channels. Binds to NPxY sequences in the cytoplasmic tails of target cargos. Associates with retriever and CCC complexes to prevent lysosomal degradation and promote cell surface recycling of numerous cargos such as integrins ITGB1, ITGB5 and their associated alpha subunits. Also required for maintenance of normal cell surface levels of APP and LRP1. Interacts with membranes containing phosphatidylinositol 3-phosphate (PtdIns(3P)). The protein is Sorting nexin-17 (Snx17) of Rattus norvegicus (Rat).